The sequence spans 145 residues: Probable inactive ribonuclease-like protein 12 (145 aa).

A signal peptide spans 1-19 (MVLMVVVFLLLLFWENELT).

Belongs to the pancreatic ribonuclease family.

The protein resides in the secreted. In terms of biological role, does not exhibit any ribonuclease activity. In Mus musculus (Mouse), this protein is Probable inactive ribonuclease-like protein 12 (Rnase12).